The sequence spans 304 residues: Non-specific ribonucleoside hydrolase RihC (304 aa).

His233 is a catalytic residue.

This sequence belongs to the IUNH family. RihC subfamily.

Its function is as follows. Hydrolyzes both purine and pyrimidine ribonucleosides with a broad-substrate specificity. The polypeptide is Non-specific ribonucleoside hydrolase RihC (Escherichia coli (strain SE11)).